The chain runs to 699 residues: MFSLGKLVKKDAFFYRYITNVNKDLKIKPITKILIANRGEIACRVMRTAKSKGVKTVAVYSEADKNSLHVSMADESYLIGPAAAKESYLCGNKIIDVAKRSGAQAIHPGYGFLSENSDFADLCEREGIIFIGPPSDAIKAMGSKSASKDIMIKAGVPTIPGYHGEDQSMSVLKSEAAKIGYPVLIKAVMGGGGKGMRIVEREEDLEDGVESSKREATASFGDSRVLVEKYLVHPRHVEIQVFADRHGNCVHLFERDCSVQRRHQKIIEEAPAPHLSEELRKKMGDAAVAAAKAVGYVGAGTVEFILSADNSFFFMEMNTRLQVEHPITEMITKQDLVEWQLKVAESQTLPMEQEQLKIHGHSFEARIYAENPDSDFLPGTGKLAHLSTPTPSDTLRVETGVRQGDEVSVYYDPMIAKLVVWDQDREKALRYLRNALDEYHIIGLNTNISFLKRLSTHPSFMAGEVETGFIPIHRESLMAPQAPMSDDSLALAATSLLLKEITQQKSKEDPNSPWSSLGGFRINHNLKKQVKFNQKDNKVVVNVEFIGGGGAAANGKHNFKVTLDNGNVVEVLDAKLNQNNETISAHVNGRFYNNIKSVIVKDTLTIFNEGQQYQLDIPQDVKPKGADGVLGSLVSPMPGKITKVMVNVGDMVKKGQPILLMEAMKMEHTIRSPIDGKVESLPYNVNEIVEDKKTLAVIV.

Residues 30-475 form the Biotin carboxylation domain; the sequence is ITKILIANRG…ETGFIPIHRE (446 aa). Lys-144, Glu-228, and His-263 together coordinate ATP. Residues 148–345 form the ATP-grasp domain; that stretch reads KDIMIKAGVP…LVEWQLKVAE (198 aa). Residue Arg-320 is part of the active site. Positions 624–699 constitute a Biotinyl-binding domain; that stretch reads KGADGVLGSL…EDKKTLAVIV (76 aa). An N6-biotinyllysine modification is found at Lys-665.

In terms of assembly, probably a dodecamer composed of six biotin-containing alpha subunits and six beta subunits. Requires Mn(2+) as cofactor. Biotin serves as cofactor.

The protein localises to the mitochondrion matrix. It catalyses the reaction 3-methylbut-2-enoyl-CoA + hydrogencarbonate + ATP = 3-methyl-(2E)-glutaconyl-CoA + ADP + phosphate + H(+). It functions in the pathway amino-acid degradation; L-leucine degradation; (S)-3-hydroxy-3-methylglutaryl-CoA from 3-isovaleryl-CoA: step 2/3. Biotin-attachment subunit of the 3-methylcrotonyl-CoA carboxylase, an enzyme that catalyzes the conversion of 3-methylcrotonyl-CoA to 3-methylglutaconyl-CoA, a critical step for leucine and isovaleric acid catabolism. This is Methylcrotonoyl-CoA carboxylase subunit alpha, mitochondrial (mccA) from Dictyostelium discoideum (Social amoeba).